Consider the following 223-residue polypeptide: Ribose-5-phosphate isomerase A (223 aa).

Substrate contacts are provided by residues 32–35 (TGST), 85–88 (DGAD), and 98–101 (KGGG). The Proton acceptor role is filled by Glu-107. Lys-125 serves as a coordination point for substrate.

It belongs to the ribose 5-phosphate isomerase family. Homodimer.

It carries out the reaction aldehydo-D-ribose 5-phosphate = D-ribulose 5-phosphate. The protein operates within carbohydrate degradation; pentose phosphate pathway; D-ribose 5-phosphate from D-ribulose 5-phosphate (non-oxidative stage): step 1/1. Functionally, catalyzes the reversible conversion of ribose-5-phosphate to ribulose 5-phosphate. The polypeptide is Ribose-5-phosphate isomerase A (Stutzerimonas stutzeri (strain A1501) (Pseudomonas stutzeri)).